The following is an 84-amino-acid chain: Large ribosomal subunit protein bL27 (84 aa).

It belongs to the bacterial ribosomal protein bL27 family.

The polypeptide is Large ribosomal subunit protein bL27 (Salinispora tropica (strain ATCC BAA-916 / DSM 44818 / JCM 13857 / NBRC 105044 / CNB-440)).